A 524-amino-acid polypeptide reads, in one-letter code: Light-independent protochlorophyllide reductase subunit B (524 aa).

Residue D36 participates in [4Fe-4S] cluster binding. Catalysis depends on D290, which acts as the Proton donor. 425-426 contacts substrate; the sequence is GL.

This sequence belongs to the ChlB/BchB/BchZ family. As to quaternary structure, protochlorophyllide reductase is composed of three subunits; ChlL, ChlN and ChlB. Forms a heterotetramer of two ChlB and two ChlN subunits. Requires [4Fe-4S] cluster as cofactor.

It catalyses the reaction chlorophyllide a + oxidized 2[4Fe-4S]-[ferredoxin] + 2 ADP + 2 phosphate = protochlorophyllide a + reduced 2[4Fe-4S]-[ferredoxin] + 2 ATP + 2 H2O. It functions in the pathway porphyrin-containing compound metabolism; chlorophyll biosynthesis (light-independent). Its function is as follows. Component of the dark-operative protochlorophyllide reductase (DPOR) that uses Mg-ATP and reduced ferredoxin to reduce ring D of protochlorophyllide (Pchlide) to form chlorophyllide a (Chlide). This reaction is light-independent. The NB-protein (ChlN-ChlB) is the catalytic component of the complex. In Synechococcus sp. (strain CC9605), this protein is Light-independent protochlorophyllide reductase subunit B.